Consider the following 507-residue polypeptide: Glucose transporter type 3 (507 aa).

Residues Met-1 to Ala-26 are disordered. Residues Met-1–Lys-53 lie on the Cytoplasmic side of the membrane. A helical transmembrane segment spans residues Ala-54–Thr-74. Residues Ala-75–Ser-95 lie on the Extracellular side of the membrane. A helical transmembrane segment spans residues Gly-96 to Val-116. The Cytoplasmic segment spans residues Arg-117–Thr-124. Residues Ile-125–Val-145 traverse the membrane as a helical segment. Residues Pro-146–Arg-152 are Extracellular-facing. Residues Phe-153–Ile-173 traverse the membrane as a helical segment. The Cytoplasmic segment spans residues Ser-174–Gly-183. The chain crosses the membrane as a helical span at residues Val-184–Leu-204. The Extracellular portion of the chain corresponds to Glu-205 to Arg-207. A helical transmembrane segment spans residues Ile-208–Glu-228. The Cytoplasmic segment spans residues Ser-229 to Arg-293. A helical membrane pass occupies residues Ser-294–Leu-314. Over Asn-315–Arg-324 the chain is Extracellular. A helical transmembrane segment spans residues Glu-325–Val-345. Over Asp-346–Arg-351 the chain is Cytoplasmic. A helical membrane pass occupies residues Pro-352–Phe-372. Residues Lys-373–Val-374 lie on the Extracellular side of the membrane. A helical membrane pass occupies residues Trp-375 to Val-395. Over Gly-396 to Pro-420 the chain is Cytoplasmic. The chain crosses the membrane as a helical span at residues Leu-421 to Phe-441. Over Gly-442–Pro-450 the chain is Extracellular. A helical membrane pass occupies residues Tyr-451–Ile-471. The Cytoplasmic segment spans residues Pro-472–Ala-507.

It belongs to the major facilitator superfamily. Sugar transporter (TC 2.A.1.1) family. Glucose transporter subfamily.

It localises to the cell membrane. Its subcellular location is the perikaryon. The protein resides in the cell projection. Its function is as follows. Facilitative glucose transporter that can also mediate the uptake of various other monosaccharides across the cell membrane. In Drosophila melanogaster (Fruit fly), this protein is Glucose transporter type 3 (Glut3).